The following is a 126-amino-acid chain: Large ribosomal subunit protein bL12 (126 aa).

It belongs to the bacterial ribosomal protein bL12 family. As to quaternary structure, homodimer. Part of the ribosomal stalk of the 50S ribosomal subunit. Forms a multimeric L10(L12)X complex, where L10 forms an elongated spine to which 2 to 4 L12 dimers bind in a sequential fashion. Binds GTP-bound translation factors.

Functionally, forms part of the ribosomal stalk which helps the ribosome interact with GTP-bound translation factors. Is thus essential for accurate translation. The sequence is that of Large ribosomal subunit protein bL12 from Legionella pneumophila (strain Paris).